A 40-amino-acid chain; its full sequence is Large ribosomal subunit protein bL36B (40 aa).

The protein belongs to the bacterial ribosomal protein bL36 family.

The protein is Large ribosomal subunit protein bL36B of Streptomyces coelicolor (strain ATCC BAA-471 / A3(2) / M145).